The following is a 207-amino-acid chain: Large ribosomal subunit protein uL4 (207 aa).

The tract at residues 48–87 (THAVKNRSAVSGGGKKPWRQKGTGRARQGSIRSPQFRGGG) is disordered.

The protein belongs to the universal ribosomal protein uL4 family. In terms of assembly, part of the 50S ribosomal subunit.

Functionally, one of the primary rRNA binding proteins, this protein initially binds near the 5'-end of the 23S rRNA. It is important during the early stages of 50S assembly. It makes multiple contacts with different domains of the 23S rRNA in the assembled 50S subunit and ribosome. In terms of biological role, forms part of the polypeptide exit tunnel. The chain is Large ribosomal subunit protein uL4 from Limosilactobacillus reuteri subsp. reuteri (strain JCM 1112) (Lactobacillus reuteri).